The following is a 277-amino-acid chain: Protein CUSTOS (277 aa).

Disordered stretches follow at residues 1–81 (MVAP…QTTP), 108–182 (TQQA…QRCR), and 238–277 (SVNG…EPKN). A compositionally biased stretch (low complexity) spans 9 to 18 (SDSESSSSDS). Ser-62 carries the post-translational modification Phosphoserine. A compositionally biased stretch (basic and acidic residues) spans 63–72 (RRREVNQHDE). Thr-80 is modified (phosphothreonine). The stretch at 106–141 (KKTQQARLQQEAKEQQEAKEQQAAKEEQAAKKEEDG) forms a coiled coil. Basic and acidic residues predominate over residues 115–142 (QEAKEQQEAKEQQAAKEEQAAKKEEDGF). Ser-158 and Ser-238 each carry phosphoserine. Basic residues predominate over residues 248–258 (TKKKKKKKAKK). The short motif at 249–256 (KKKKKKKA) is the Nucleolar localization signal (NLS) element. The segment covering 265–277 (CPPAECAAAEPKN) has biased composition (low complexity).

It belongs to the CUSTOS family.

It is found in the nucleus envelope. In terms of biological role, plays a role in the regulation of Wnt signaling pathway during early development. The chain is Protein CUSTOS from Rattus norvegicus (Rat).